The primary structure comprises 331 residues: 6-phosphogluconolactonase (331 aa).

N6-acetyllysine is present on lysine 287.

It belongs to the cycloisomerase 2 family.

It catalyses the reaction 6-phospho-D-glucono-1,5-lactone + H2O = 6-phospho-D-gluconate + H(+). It participates in carbohydrate degradation; pentose phosphate pathway; D-ribulose 5-phosphate from D-glucose 6-phosphate (oxidative stage): step 2/3. Catalyzes the hydrolysis of 6-phosphogluconolactone to 6-phosphogluconate. The polypeptide is 6-phosphogluconolactonase (Escherichia coli O127:H6 (strain E2348/69 / EPEC)).